Here is an 830-residue protein sequence, read N- to C-terminus: Probable glucan 1,3-beta-glucosidase D (830 aa).

A compositionally biased stretch (basic and acidic residues) spans 1 to 34 (MPSQSRSRDRYRGRDTEYTRRRYPDEHDYSHDDH). Residues 1-279 (MPSQSRSRDR…PPMDARWPKG (279 aa)) form a disordered region. The Cytoplasmic segment spans residues 1–301 (MPSQSRSRDR…GRPFWKQKKW (301 aa)). The span at 35–51 (DYDYDDDDDDNDDLEQD) shows a compositional bias: acidic residues. Basic and acidic residues-rich tracts occupy residues 52 to 98 (VTER…ERRR) and 110 to 175 (QHRE…KHQS). Over residues 181–194 (SASHLLSADALARL) the composition is skewed to low complexity. Basic and acidic residues-rich tracts occupy residues 198-215 (YEKE…AAKA), 228-243 (EQER…DRSR), and 253-264 (EEGRGPEMEFRR). The helical; Signal-anchor for type II membrane protein transmembrane segment at 302-322 (LIGIGVVILILVIVIPVAVVV) threads the bilayer. At 323–830 (SKKHNDKPNA…PDFGSLPEYY (508 aa)) the chain is on the extracellular side. Residues 327-351 (NDKPNATTTQPDGTTPSNSNLDGLS) are disordered. The segment covering 330 to 348 (PNATTTQPDGTTPSNSNLD) has biased composition (polar residues). 6 N-linked (GlcNAc...) asparagine glycosylation sites follow: Asn331, Asn376, Asn381, Asn393, Asn546, and Asn558. Glu597 serves as the catalytic Proton donor. Residues Asn610, Asn636, Asn669, and Asn689 are each glycosylated (N-linked (GlcNAc...) asparagine). Glu701 (nucleophile) is an active-site residue.

The protein belongs to the glycosyl hydrolase 5 (cellulase A) family.

It localises to the cell membrane. The enzyme catalyses Successive hydrolysis of beta-D-glucose units from the non-reducing ends of (1-&gt;3)-beta-D-glucans, releasing alpha-glucose.. In terms of biological role, glucosidase involved in the degradation of cellulosic biomass. Active on lichenan. The sequence is that of Probable glucan 1,3-beta-glucosidase D (exgD) from Aspergillus clavatus (strain ATCC 1007 / CBS 513.65 / DSM 816 / NCTC 3887 / NRRL 1 / QM 1276 / 107).